The sequence spans 314 residues: tRNA dimethylallyltransferase (314 aa).

13–20 (GPTASGKS) lines the ATP pocket. 15-20 (TASGKS) is a substrate binding site. 2 interaction with substrate tRNA regions span residues 38 to 41 (DSMQ) and 161 to 165 (QRIAR).

The protein belongs to the IPP transferase family. Monomer. Mg(2+) is required as a cofactor.

The catalysed reaction is adenosine(37) in tRNA + dimethylallyl diphosphate = N(6)-dimethylallyladenosine(37) in tRNA + diphosphate. Functionally, catalyzes the transfer of a dimethylallyl group onto the adenine at position 37 in tRNAs that read codons beginning with uridine, leading to the formation of N6-(dimethylallyl)adenosine (i(6)A). The chain is tRNA dimethylallyltransferase from Parvibaculum lavamentivorans (strain DS-1 / DSM 13023 / NCIMB 13966).